A 294-amino-acid chain; its full sequence is Undecaprenyl-diphosphatase (294 aa).

The next 6 helical transmembrane spans lie at 39 to 59 (PGAAFTAIIQIGTELAVILYF), 93 to 113 (TQMGWFIIIGTLPILIAGLLF), 123 to 143 (NLWITVTVLIIFGILLWVVDA), 197 to 217 (VSFLMAIPAVFGAGILEAVSA), 234 to 254 (ATIAATIVAFVVGYVVIIGFL), and 265 to 285 (FAIYRIALAVVVALLLICGVL).

It belongs to the UppP family.

It is found in the cell membrane. The enzyme catalyses di-trans,octa-cis-undecaprenyl diphosphate + H2O = di-trans,octa-cis-undecaprenyl phosphate + phosphate + H(+). In terms of biological role, catalyzes the dephosphorylation of undecaprenyl diphosphate (UPP). Confers resistance to bacitracin. The chain is Undecaprenyl-diphosphatase from Bifidobacterium adolescentis (strain ATCC 15703 / DSM 20083 / NCTC 11814 / E194a).